A 144-amino-acid polypeptide reads, in one-letter code: D-aminoacyl-tRNA deacylase (144 aa).

The Gly-cisPro motif, important for rejection of L-amino acids motif lies at 136-137; sequence GP.

Belongs to the DTD family. As to quaternary structure, homodimer.

It localises to the cytoplasm. It carries out the reaction glycyl-tRNA(Ala) + H2O = tRNA(Ala) + glycine + H(+). The catalysed reaction is a D-aminoacyl-tRNA + H2O = a tRNA + a D-alpha-amino acid + H(+). An aminoacyl-tRNA editing enzyme that deacylates mischarged D-aminoacyl-tRNAs. Also deacylates mischarged glycyl-tRNA(Ala), protecting cells against glycine mischarging by AlaRS. Acts via tRNA-based rather than protein-based catalysis; rejects L-amino acids rather than detecting D-amino acids in the active site. By recycling D-aminoacyl-tRNA to D-amino acids and free tRNA molecules, this enzyme counteracts the toxicity associated with the formation of D-aminoacyl-tRNA entities in vivo and helps enforce protein L-homochirality. This is D-aminoacyl-tRNA deacylase from Actinobacillus succinogenes (strain ATCC 55618 / DSM 22257 / CCUG 43843 / 130Z).